A 155-amino-acid polypeptide reads, in one-letter code: 3-hydroxyacyl-[acyl-carrier-protein] dehydratase FabZ (155 aa).

Residue His58 is part of the active site.

The protein belongs to the thioester dehydratase family. FabZ subfamily.

Its subcellular location is the cytoplasm. The enzyme catalyses a (3R)-hydroxyacyl-[ACP] = a (2E)-enoyl-[ACP] + H2O. Involved in unsaturated fatty acids biosynthesis. Catalyzes the dehydration of short chain beta-hydroxyacyl-ACPs and long chain saturated and unsaturated beta-hydroxyacyl-ACPs. This chain is 3-hydroxyacyl-[acyl-carrier-protein] dehydratase FabZ, found in Rhizobium etli (strain CIAT 652).